Here is a 1034-residue protein sequence, read N- to C-terminus: Protein argonaute 2 (1034 aa).

The segment at 1–201 (MEHERGGGGR…PMRRPDGGGS (201 aa)) is disordered. Over residues 18 to 125 (GGRGGGGGDG…ESGGGGGRGG (108 aa)) the composition is skewed to gly residues. Residues 172 to 187 (VVRVQPPAPPVAVSRS) are compositionally biased toward low complexity. One can recognise a PAZ domain in the interval 391 to 504 (PVLDLVQKSV…VPIELCDLLE (114 aa)). One can recognise a Piwi domain in the interval 688 to 989 (LLFCPMSDQH…AAYRGRLYYE (302 aa)).

Belongs to the argonaute family. Ago subfamily.

Probably involved in the RNA silencing pathway. May bind to short RNAs such as microRNAs (miRNAs) or short interfering RNAs (siRNAs), and represses the translation of mRNAs which are complementary to them. This Oryza sativa subsp. japonica (Rice) protein is Protein argonaute 2 (AGO2).